The primary structure comprises 152 residues: Ribosome maturation factor RimP (152 aa).

Belongs to the RimP family.

It is found in the cytoplasm. Its function is as follows. Required for maturation of 30S ribosomal subunits. This Sodalis glossinidius (strain morsitans) protein is Ribosome maturation factor RimP.